The chain runs to 155 residues: DNA-directed RNA polymerase II subunit rpb4 (155 aa).

Belongs to the eukaryotic RPB4 RNA polymerase subunit family. Component of the RNA polymerase II (Pol II) complex consisting of 12 subunits. RPB4 and RPB7 form a subcomplex that protrudes from the 10-subunit Pol II core complex.

It is found in the nucleus. DNA-dependent RNA polymerase catalyzes the transcription of DNA into RNA using the four ribonucleoside triphosphates as substrates. Component of RNA polymerase II which synthesizes mRNA precursors and many functional non-coding RNAs. Pol II is the central component of the basal RNA polymerase II transcription machinery. It is composed of mobile elements that move relative to each other. RPB4 is part of a subcomplex with RPB7 that binds to a pocket formed by RPB1, RPB2 and RPB6 at the base of the clamp element. The RPB4-RPB7 subcomplex seems to lock the clamp via RPB7 in the closed conformation thus preventing double-stranded DNA to enter the active site cleft. The RPB4-RPB7 subcomplex binds single-stranded DNA and RNA. This Dictyostelium discoideum (Social amoeba) protein is DNA-directed RNA polymerase II subunit rpb4 (polr2d).